The following is a 689-amino-acid chain: Glycine--tRNA ligase beta subunit (689 aa).

It belongs to the class-II aminoacyl-tRNA synthetase family. In terms of assembly, tetramer of two alpha and two beta subunits.

The protein resides in the cytoplasm. The enzyme catalyses tRNA(Gly) + glycine + ATP = glycyl-tRNA(Gly) + AMP + diphosphate. This is Glycine--tRNA ligase beta subunit from Shewanella putrefaciens (strain CN-32 / ATCC BAA-453).